A 648-amino-acid chain; its full sequence is 1-deoxy-D-xylulose-5-phosphate synthase (648 aa).

Residues histidine 79 and 120–122 contribute to the thiamine diphosphate site; that span reads GHA. Aspartate 152 provides a ligand contact to Mg(2+). Residues 153-154, asparagine 181, phenylalanine 293, and glutamate 377 contribute to the thiamine diphosphate site; that span reads GS. Asparagine 181 provides a ligand contact to Mg(2+).

Belongs to the transketolase family. DXPS subfamily. As to quaternary structure, homodimer. The cofactor is Mg(2+). Thiamine diphosphate is required as a cofactor.

The catalysed reaction is D-glyceraldehyde 3-phosphate + pyruvate + H(+) = 1-deoxy-D-xylulose 5-phosphate + CO2. It functions in the pathway metabolic intermediate biosynthesis; 1-deoxy-D-xylulose 5-phosphate biosynthesis; 1-deoxy-D-xylulose 5-phosphate from D-glyceraldehyde 3-phosphate and pyruvate: step 1/1. In terms of biological role, catalyzes the acyloin condensation reaction between C atoms 2 and 3 of pyruvate and glyceraldehyde 3-phosphate to yield 1-deoxy-D-xylulose-5-phosphate (DXP). In Bacteroides fragilis (strain ATCC 25285 / DSM 2151 / CCUG 4856 / JCM 11019 / LMG 10263 / NCTC 9343 / Onslow / VPI 2553 / EN-2), this protein is 1-deoxy-D-xylulose-5-phosphate synthase.